Reading from the N-terminus, the 396-residue chain is Elongation factor Tu (396 aa).

A tr-type G domain is found at Lys-10 to Glu-206. The tract at residues Gly-19 to Thr-26 is G1. Gly-19–Thr-26 serves as a coordination point for GTP. Thr-26 is a binding site for Mg(2+). The G2 stretch occupies residues Gly-60–Asn-64. A G3 region spans residues Asp-81–Gly-84. Residues Asp-81–His-85 and Asn-136–Asp-139 contribute to the GTP site. Residues Asn-136–Asp-139 are G4. The interval Ser-174–Lys-176 is G5.

This sequence belongs to the TRAFAC class translation factor GTPase superfamily. Classic translation factor GTPase family. EF-Tu/EF-1A subfamily. Monomer.

The protein resides in the cytoplasm. The enzyme catalyses GTP + H2O = GDP + phosphate + H(+). Functionally, GTP hydrolase that promotes the GTP-dependent binding of aminoacyl-tRNA to the A-site of ribosomes during protein biosynthesis. This is Elongation factor Tu from Cupriavidus necator (strain ATCC 17699 / DSM 428 / KCTC 22496 / NCIMB 10442 / H16 / Stanier 337) (Ralstonia eutropha).